A 222-amino-acid polypeptide reads, in one-letter code: MRKDVKIYLNHILESIELIEEYTKDKTEDDFFTSKFLQDAVIRRIEIIGEAIKNLPMEFREKYNHIPWKEFAEMRDILIRKYFGVDLGLTWEVVKKDIPKLKEEILKIMEELDKNKNNKYNVFAYGELMKKERLLELINRVPKMIEGRVYGYEKFFDETIGYYGARKKEGSYIDGIILLDITDKELGIFDDYEDLDVYYIREKTTAVSEDGRKYDVYIYLRK.

R75 is an active-site residue. The short motif at 75 to 82 (RDILIRKY) is the RX(4)HXY motif element. Position 82 is an O-di-AMP-tyrosine (Y82).

The protein in the N-terminal section; belongs to the HepT RNase toxin family. In the C-terminal section; belongs to the gamma-glutamylcyclotransferase family. As to quaternary structure, homodimer, probably forms a complex with cognate antitoxin MJ0435. In terms of processing, modified by cognate antitoxin MJ0435; probably at least 2 successive AMPylation events occur on Tyr-82.

In terms of biological role, probable toxic component of a putative type VII toxin-antitoxin (TA) system, probably an RNase. Probably neutralized by cognate antitoxin MJ0435. Neutralization may be due to AMPylation by MJ0435. This Methanocaldococcus jannaschii (strain ATCC 43067 / DSM 2661 / JAL-1 / JCM 10045 / NBRC 100440) (Methanococcus jannaschii) protein is Gamma-glutamylcyclotransferase and putative RNase MJ0434.